A 428-amino-acid chain; its full sequence is Phosphomethylpyrimidine synthase 2 (428 aa).

Substrate-binding positions include Met-94, Tyr-123, His-162, 184–186 (SRG), 225–228 (NGMR), and Glu-264. Zn(2+) is bound at residue His-268. Tyr-291 serves as a coordination point for substrate. Position 332 (His-332) interacts with Zn(2+). The [4Fe-4S] cluster site is built by Cys-408, Cys-411, and Cys-415.

It belongs to the ThiC family. The cofactor is [4Fe-4S] cluster.

It carries out the reaction 5-amino-1-(5-phospho-beta-D-ribosyl)imidazole + S-adenosyl-L-methionine = 4-amino-2-methyl-5-(phosphooxymethyl)pyrimidine + CO + 5'-deoxyadenosine + formate + L-methionine + 3 H(+). It functions in the pathway cofactor biosynthesis; thiamine diphosphate biosynthesis. Its function is as follows. Catalyzes the synthesis of the hydroxymethylpyrimidine phosphate (HMP-P) moiety of thiamine from aminoimidazole ribotide (AIR) in a radical S-adenosyl-L-methionine (SAM)-dependent reaction. The chain is Phosphomethylpyrimidine synthase 2 from Methanosarcina acetivorans (strain ATCC 35395 / DSM 2834 / JCM 12185 / C2A).